Here is a 147-residue protein sequence, read N- to C-terminus: Two-component response regulator ORR11 (147 aa).

One can recognise a Response regulatory domain in the interval 29 to 146 (HVLAVDDSSV…DVSRLFSRVL (118 aa)). Asp79 is subject to 4-aspartylphosphate.

It belongs to the ARR family. Type-A subfamily. Two-component system major event consists of a His-to-Asp phosphorelay between a sensor histidine kinase (HK) and a response regulator (RR). In plants, the His-to-Asp phosphorelay involves an additional intermediate named Histidine-containing phosphotransfer protein (HPt). This multistep phosphorelay consists of a His-Asp-His-Asp sequential transfer of a phosphate group between first a His and an Asp of the HK protein, followed by the transfer to a conserved His of the HPt protein and finally the transfer to an Asp in the receiver domain of the RR protein.

In terms of biological role, functions as a response regulator involved in His-to-Asp phosphorelay signal transduction system. Phosphorylation of the Asp residue in the receiver domain activates the ability of the protein to promote the transcription of target genes. Type-A response regulators seem to act as negative regulators of the cytokinin signaling. This is Two-component response regulator ORR11 from Oryza sativa subsp. indica (Rice).